Reading from the N-terminus, the 364-residue chain is E3 ubiquitin-protein ligase rnf146 (364 aa).

Positions 18 to 37 (KKVSGEAVPEGSGSPSSPSL) are disordered. Positions 22–34 (GEAVPEGSGSPSS) are enriched in low complexity. The RING-type zinc-finger motif lies at 42–80 (CPICLQSCVHPVRLPCRHIFCFLCVKGASWHSKRCALCR). The WWE domain occupies 102-178 (SATGGCGTGS…EHGRRRRMKR (77 aa)). 7 residues coordinate a glycoprotein: Y118, R121, W125, Y155, Q164, R174, and K186. Disordered stretches follow at residues 217–262 (AAAE…PASS) and 279–364 (NEQE…VTKV). Composition is skewed to acidic residues over residues 281 to 295 (QEPE…DDSA) and 308 to 322 (TSDD…DENE).

It is found in the cytoplasm. Its subcellular location is the cytosol. The protein resides in the nucleus. It carries out the reaction S-ubiquitinyl-[E2 ubiquitin-conjugating enzyme]-L-cysteine + [acceptor protein]-L-lysine = [E2 ubiquitin-conjugating enzyme]-L-cysteine + N(6)-ubiquitinyl-[acceptor protein]-L-lysine.. Its pathway is protein modification; protein ubiquitination. Its function is as follows. E3 ubiquitin-protein ligase that specifically binds poly-ADP-ribosylated proteins and mediates their ubiquitination and subsequent degradation. May regulate many important biological processes, such as cell survival and DNA damage response. Acts as an activator of the Wnt signaling pathway by mediating the ubiquitination of poly-ADP-ribosylated proteins. Neuroprotective protein. Protects against cell death induced by DNA damaging agents and rescues cells from G1 arrest. Promotes cell survival after gamma-irradiation. Facilitates DNA repair. The sequence is that of E3 ubiquitin-protein ligase rnf146 (rnf146) from Danio rerio (Zebrafish).